The primary structure comprises 110 residues: Small ribosomal subunit protein eS25 (110 aa).

The disordered stretch occupies residues 1-38; it reads MGGKKKPTLSQLAKKAEKEKAQQAQKAKKEVKKEETPA. Positions 14–38 are enriched in basic and acidic residues; sequence KKAEKEKAQQAQKAKKEVKKEETPA.

The protein belongs to the eukaryotic ribosomal protein eS25 family.

This is Small ribosomal subunit protein eS25 (rps25e) from Pyrobaculum aerophilum (strain ATCC 51768 / DSM 7523 / JCM 9630 / CIP 104966 / NBRC 100827 / IM2).